A 184-amino-acid chain; its full sequence is GTP cyclohydrolase 1 (184 aa).

Zn(2+) is bound by residues Cys75, His78, and Cys146.

Belongs to the GTP cyclohydrolase I family. Homomer.

The enzyme catalyses GTP + H2O = 7,8-dihydroneopterin 3'-triphosphate + formate + H(+). It functions in the pathway cofactor biosynthesis; 7,8-dihydroneopterin triphosphate biosynthesis; 7,8-dihydroneopterin triphosphate from GTP: step 1/1. This Teredinibacter turnerae (strain ATCC 39867 / T7901) protein is GTP cyclohydrolase 1.